A 460-amino-acid chain; its full sequence is Bifunctional protein GlmU (460 aa).

Positions Met1–Arg230 are pyrophosphorylase. UDP-N-acetyl-alpha-D-glucosamine is bound by residues Leu9–Gly12, Lys23, Gln73, and Gly78–Thr79. Residue Asp103 coordinates Mg(2+). Residues Gly140, Glu155, Asn170, and Asn228 each contribute to the UDP-N-acetyl-alpha-D-glucosamine site. Asn228 is a binding site for Mg(2+). A linker region spans residues Val231 to Asn251. Positions Gly252–Lys460 are N-acetyltransferase. Residues Arg333 and Lys351 each contribute to the UDP-N-acetyl-alpha-D-glucosamine site. Residue His363 is the Proton acceptor of the active site. 2 residues coordinate UDP-N-acetyl-alpha-D-glucosamine: Tyr366 and Asn377. Acetyl-CoA contacts are provided by residues Ala380, Asn386–Tyr387, Ser405, Ala423, and Arg440.

In the N-terminal section; belongs to the N-acetylglucosamine-1-phosphate uridyltransferase family. The protein in the C-terminal section; belongs to the transferase hexapeptide repeat family. Homotrimer. Requires Mg(2+) as cofactor.

It localises to the cytoplasm. The catalysed reaction is alpha-D-glucosamine 1-phosphate + acetyl-CoA = N-acetyl-alpha-D-glucosamine 1-phosphate + CoA + H(+). The enzyme catalyses N-acetyl-alpha-D-glucosamine 1-phosphate + UTP + H(+) = UDP-N-acetyl-alpha-D-glucosamine + diphosphate. It functions in the pathway nucleotide-sugar biosynthesis; UDP-N-acetyl-alpha-D-glucosamine biosynthesis; N-acetyl-alpha-D-glucosamine 1-phosphate from alpha-D-glucosamine 6-phosphate (route II): step 2/2. The protein operates within nucleotide-sugar biosynthesis; UDP-N-acetyl-alpha-D-glucosamine biosynthesis; UDP-N-acetyl-alpha-D-glucosamine from N-acetyl-alpha-D-glucosamine 1-phosphate: step 1/1. Its pathway is bacterial outer membrane biogenesis; LPS lipid A biosynthesis. In terms of biological role, catalyzes the last two sequential reactions in the de novo biosynthetic pathway for UDP-N-acetylglucosamine (UDP-GlcNAc). The C-terminal domain catalyzes the transfer of acetyl group from acetyl coenzyme A to glucosamine-1-phosphate (GlcN-1-P) to produce N-acetylglucosamine-1-phosphate (GlcNAc-1-P), which is converted into UDP-GlcNAc by the transfer of uridine 5-monophosphate (from uridine 5-triphosphate), a reaction catalyzed by the N-terminal domain. The polypeptide is Bifunctional protein GlmU (Streptococcus suis (strain 98HAH33)).